A 190-amino-acid chain; its full sequence is uncharacterized protein (190 aa).

This is an uncharacterized protein from Homo sapiens (Human).